The following is a 290-amino-acid chain: UPF0761 membrane protein ASA_4118 (290 aa).

6 helical membrane passes run 48 to 68 (LLSL…FPVF), 104 to 124 (NTTA…ISAI), 144 to 164 (FAMY…SIAI), 182 to 202 (IGYL…FLLV), 216 to 236 (AFIG…GFAI), and 250 to 270 (ALAT…VVLL).

The protein belongs to the UPF0761 family.

The protein resides in the cell inner membrane. The polypeptide is UPF0761 membrane protein ASA_4118 (Aeromonas salmonicida (strain A449)).